Here is a 142-residue protein sequence, read N- to C-terminus: Protein Turandot X (142 aa).

The first 22 residues, 1–22, serve as a signal peptide directing secretion; that stretch reads MGLSIGSLLICVFLGIVPFATA.

The protein belongs to the Turandot family.

It is found in the secreted. In terms of biological role, a humoral factor that may play a role in stress tolerance. The chain is Protein Turandot X from Drosophila melanogaster (Fruit fly).